We begin with the raw amino-acid sequence, 354 residues long: Fructose-bisphosphate aldolase (354 aa).

S50 lines the D-glyceraldehyde 3-phosphate pocket. D83 serves as the catalytic Proton donor. Residues H84, D105, E142, and H198 each contribute to the Zn(2+) site. Residue G199 participates in dihydroxyacetone phosphate binding. H232 serves as a coordination point for Zn(2+). Dihydroxyacetone phosphate-binding positions include 233-235 (GSS) and 275-278 (NIDT).

It belongs to the class II fructose-bisphosphate aldolase family. Zn(2+) serves as cofactor.

It carries out the reaction beta-D-fructose 1,6-bisphosphate = D-glyceraldehyde 3-phosphate + dihydroxyacetone phosphate. It participates in carbohydrate degradation; glycolysis; D-glyceraldehyde 3-phosphate and glycerone phosphate from D-glucose: step 4/4. Catalyzes the aldol condensation of dihydroxyacetone phosphate (DHAP or glycerone-phosphate) with glyceraldehyde 3-phosphate (G3P) to form fructose 1,6-bisphosphate (FBP) in gluconeogenesis and the reverse reaction in glycolysis. This is Fructose-bisphosphate aldolase (fba) from Stutzerimonas stutzeri (Pseudomonas stutzeri).